The primary structure comprises 1216 residues: Tyrosine-protein kinase receptor ver-4 (1216 aa).

At 1-789 (MRVSLTEFLV…VKVAGASSSS (789 aa)) the chain is on the extracellular side. 16 N-linked (GlcNAc...) asparagine glycosylation sites follow: Asn-142, Asn-195, Asn-206, Asn-245, Asn-283, Asn-333, Asn-348, Asn-384, Asn-402, Asn-412, Asn-496, Asn-508, Asn-588, Asn-599, Asn-664, and Asn-703. Ig-like C2-type domains lie at 596–691 (KSVN…TSIS) and 697–783 (PPFL…VKVA). The cysteines at positions 619 and 675 are disulfide-linked. Residues Cys-721 and Cys-765 are joined by a disulfide bond. A helical transmembrane segment spans residues 790–810 (FFWLFITFFAFVVVGIVVSLL). The Cytoplasmic portion of the chain corresponds to 811 to 1216 (WKLFGQKDLK…WVQKPTQLFF (406 aa)). Positions 870–1181 (LEILETLGSG…IKLFKNHIQY (312 aa)) constitute a Protein kinase domain. ATP is bound by residues 876 to 884 (LGSGQFGIV) and Lys-908. Residue Asp-1042 is the Proton acceptor of the active site.

The protein belongs to the protein kinase superfamily. Tyr protein kinase family.

It is found in the cell membrane. The enzyme catalyses L-tyrosyl-[protein] + ATP = O-phospho-L-tyrosyl-[protein] + ADP + H(+). Its function is as follows. Receptor tyrosine kinase which may be involved, downstream of pvf-1, in the positioning of ray 1, the most anterior ray sensillum in the male tail. This chain is Tyrosine-protein kinase receptor ver-4, found in Caenorhabditis elegans.